The following is a 506-amino-acid chain: Dipeptide and tripeptide permease A (506 aa).

The Cytoplasmic portion of the chain corresponds to 1-36 (MSTANNNSESTESVSMNAFKQPKAFYLIFSIELWER). Residues 37 to 57 (FGYYGLQGIMAVYLVKMLGMS) traverse the membrane as a helical segment. The Periplasmic segment spans residues 58 to 61 (ETDS). A helical transmembrane segment spans residues 62–82 (ITLFSSFSALVYGFVAIGGWL). Over 83 to 91 (GDKVLGTKR) the chain is Cytoplasmic. Transmembrane regions (helical) follow at residues 92–112 (VIVLGAIVLAIGYTMIAYSGH) and 113–133 (SVAWVYIGMATIAVGNGLFKA). Over 134-155 (NPSALLSTCYAKDDPRLDGAFT) the chain is Cytoplasmic. Residues 156–176 (MYYMAVNIGSFFSMLATPVLA) traverse the membrane as a helical segment. Residues 177-180 (ANYG) are Periplasmic-facing. A helical transmembrane segment spans residues 181 to 201 (WSVAFSLSVVGMILTLVNFMF). The Cytoplasmic segment spans residues 202–222 (CRKWVSTQGSQPDFQPINLKK). The chain crosses the membrane as a helical span at residues 223–243 (LVITLAGIVVLVALSTWLLHN). The Periplasmic portion of the chain corresponds to 244–248 (QGVAR). A helical membrane pass occupies residues 249 to 269 (WILTIISLAVVAIFIKEMLAV). At 270–276 (SGAERRK) the chain is on the cytoplasmic side. The helical transmembrane segment at 277–297 (MIVALLLMLEAVVFFVLYNQM) threads the bilayer. At 298 to 322 (PTSLNFFAIRNVEHSILGFAFEPEQ) the chain is on the periplasmic side. The chain crosses the membrane as a helical span at residues 323–343 (YQALNPFWIMVASPLLAAVYN). The Cytoplasmic portion of the chain corresponds to 344–354 (KMGDQLPMAHK). Residues 355–375 (FAIGMVLCSGAFLVLPWGASM) form a helical membrane-spanning segment. Topologically, residues 376 to 385 (ANEQGIVSVN) are periplasmic. A helical transmembrane segment spans residues 386-406 (WLILCYGLQSIGELMISGLGL). The Cytoplasmic portion of the chain corresponds to 407-416 (AMVAQLVPQR). Residues 417–437 (LMGFIMGAWFLTSAGAAIIAG) traverse the membrane as a helical segment. The Periplasmic segment spans residues 438-461 (YVANMMAVPENVVDPHVSLEVYSN). The chain crosses the membrane as a helical span at residues 462-482 (VFMQIGIVTGIIAVLMMLTAP). The Cytoplasmic portion of the chain corresponds to 483–506 (KLTRMTQDVATDVPADAATTTASA).

The protein belongs to the major facilitator superfamily. Proton-dependent oligopeptide transporter (POT/PTR) (TC 2.A.17) family. DtpA subfamily.

Its subcellular location is the cell inner membrane. Proton-dependent permease that transports di- and tripeptides. This is Dipeptide and tripeptide permease A from Pectobacterium carotovorum subsp. carotovorum (strain PC1).